Here is a 375-residue protein sequence, read N- to C-terminus: Chaperone protein DnaJ (375 aa).

The region spanning 5–68 is the J domain; sequence DYYEILGVSK…KKRAQYDQFG (64 aa). Residues 135 to 217 form a CR-type zinc finger; it reads GISKNINYDR…CYGKKVINER (83 aa). Zn(2+) is bound by residues Cys148, Cys151, Cys165, Cys168, Cys191, Cys194, Cys205, and Cys208. CXXCXGXG motif repeat units follow at residues 148–155, 165–172, 191–198, and 205–212; these read CHKCQGTG, CTKCHGRG, CHECEGTG, and CEQCYGKK.

This sequence belongs to the DnaJ family. Homodimer. Requires Zn(2+) as cofactor.

It is found in the cytoplasm. Participates actively in the response to hyperosmotic and heat shock by preventing the aggregation of stress-denatured proteins and by disaggregating proteins, also in an autonomous, DnaK-independent fashion. Unfolded proteins bind initially to DnaJ; upon interaction with the DnaJ-bound protein, DnaK hydrolyzes its bound ATP, resulting in the formation of a stable complex. GrpE releases ADP from DnaK; ATP binding to DnaK triggers the release of the substrate protein, thus completing the reaction cycle. Several rounds of ATP-dependent interactions between DnaJ, DnaK and GrpE are required for fully efficient folding. Also involved, together with DnaK and GrpE, in the DNA replication of plasmids through activation of initiation proteins. The chain is Chaperone protein DnaJ from Ureaplasma parvum serovar 3 (strain ATCC 700970).